The sequence spans 212 residues: Uridine kinase (212 aa).

13–20 (GGSGSGKT) contacts ATP.

This sequence belongs to the uridine kinase family.

It localises to the cytoplasm. It carries out the reaction uridine + ATP = UMP + ADP + H(+). It catalyses the reaction cytidine + ATP = CMP + ADP + H(+). Its pathway is pyrimidine metabolism; CTP biosynthesis via salvage pathway; CTP from cytidine: step 1/3. It functions in the pathway pyrimidine metabolism; UMP biosynthesis via salvage pathway; UMP from uridine: step 1/1. The protein is Uridine kinase of Bacillus thuringiensis (strain Al Hakam).